The following is a 348-amino-acid chain: UDP-3-O-acylglucosamine N-acyltransferase (348 aa).

Catalysis depends on His-241, which acts as the Proton acceptor.

It belongs to the transferase hexapeptide repeat family. LpxD subfamily. As to quaternary structure, homotrimer.

It carries out the reaction a UDP-3-O-[(3R)-3-hydroxyacyl]-alpha-D-glucosamine + a (3R)-hydroxyacyl-[ACP] = a UDP-2-N,3-O-bis[(3R)-3-hydroxyacyl]-alpha-D-glucosamine + holo-[ACP] + H(+). The protein operates within bacterial outer membrane biogenesis; LPS lipid A biosynthesis. Its function is as follows. Catalyzes the N-acylation of UDP-3-O-acylglucosamine using 3-hydroxyacyl-ACP as the acyl donor. Is involved in the biosynthesis of lipid A, a phosphorylated glycolipid that anchors the lipopolysaccharide to the outer membrane of the cell. This chain is UDP-3-O-acylglucosamine N-acyltransferase, found in Neisseria meningitidis serogroup C / serotype 2a (strain ATCC 700532 / DSM 15464 / FAM18).